Here is a 216-residue protein sequence, read N- to C-terminus: Phosphoribosylformylglycinamidine synthase subunit PurQ (216 aa).

One can recognise a Glutamine amidotransferase type-1 domain in the interval 2–216; sequence SIGVIVFPGS…GRRMLEALLG (215 aa). Catalysis depends on cysteine 86, which acts as the Nucleophile. Residues histidine 193 and glutamate 195 contribute to the active site.

In terms of assembly, part of the FGAM synthase complex composed of 1 PurL, 1 PurQ and 2 PurS subunits.

The protein resides in the cytoplasm. The catalysed reaction is N(2)-formyl-N(1)-(5-phospho-beta-D-ribosyl)glycinamide + L-glutamine + ATP + H2O = 2-formamido-N(1)-(5-O-phospho-beta-D-ribosyl)acetamidine + L-glutamate + ADP + phosphate + H(+). It carries out the reaction L-glutamine + H2O = L-glutamate + NH4(+). The protein operates within purine metabolism; IMP biosynthesis via de novo pathway; 5-amino-1-(5-phospho-D-ribosyl)imidazole from N(2)-formyl-N(1)-(5-phospho-D-ribosyl)glycinamide: step 1/2. In terms of biological role, part of the phosphoribosylformylglycinamidine synthase complex involved in the purines biosynthetic pathway. Catalyzes the ATP-dependent conversion of formylglycinamide ribonucleotide (FGAR) and glutamine to yield formylglycinamidine ribonucleotide (FGAM) and glutamate. The FGAM synthase complex is composed of three subunits. PurQ produces an ammonia molecule by converting glutamine to glutamate. PurL transfers the ammonia molecule to FGAR to form FGAM in an ATP-dependent manner. PurS interacts with PurQ and PurL and is thought to assist in the transfer of the ammonia molecule from PurQ to PurL. This chain is Phosphoribosylformylglycinamidine synthase subunit PurQ, found in Synechococcus sp. (strain CC9605).